The sequence spans 1051 residues: Serine/threonine-protein kinase ULK1 (1051 aa).

Residues Phe-16–Leu-278 form the Protein kinase domain. ATP-binding positions include Ile-22–Val-30 and Lys-46. Asp-138 (proton acceptor) is an active-site residue. Position 162 is an N6-acetyllysine (Lys-162). 3 disordered regions span residues Pro-283–Gln-323, Ala-335–Val-358, and Gly-394–His-554. The tract at residues Ser-287–Gly-416 is interaction with GABARAP and GABARAPL2. Low complexity-rich tracts occupy residues Tyr-295–Leu-318, Gly-340–Lys-349, and Arg-400–Ser-423. The residue at position 317 (Ser-317) is a Phosphoserine; by AMPK. Phosphoserine occurs at positions 403 and 450. The segment covering Gln-437–Ser-459 has biased composition (polar residues). Phosphothreonine is present on Thr-456. Residues Ser-467, Ser-477, Ser-479, and Ser-521 each carry the phosphoserine modification. Ser-555 bears the Phosphoserine; by AMPK mark. Thr-574 carries the post-translational modification Phosphothreonine. Lys-606 is subject to N6-acetyllysine. Phosphothreonine is present on Thr-635. At Ser-637 the chain carries Phosphoserine; by AMPK. Position 638 is a phosphoserine (Ser-638). 2 disordered regions span residues Pro-661–Gly-686 and Ala-727–Ser-787. The span at Gly-731 to Ala-745 shows a compositional bias: gly residues. A Phosphoserine; by MTOR modification is found at Ser-757. Residue Ser-774 is modified to Phosphoserine. Positions Ser-774–Ser-787 are enriched in low complexity. Ser-777 carries the phosphoserine; by AMPK modification. Residues Pro-829–Ala-1051 form a C-terminal domain; mediates interaction with SESN2 region.

The protein belongs to the protein kinase superfamily. Ser/Thr protein kinase family. APG1/unc-51/ULK1 subfamily. Interacts with GABARAP and GABARAPL2. Interacts (via C-terminus) with ATG13. Part of a complex consisting of ATG13, ATG101, ULK1 and RB1CC1. Associates with the mammalian target of rapamycin complex 1 (mTORC1) through an interaction with RPTOR; the association depends on nutrient conditions and is reduced during starvation. Interacts with FEZ1; SCOC interferes with FEZ1-binding. Interacts with TBC1D14. Interacts (phosphorylated form) with TRIM5. When phosphorylated at Ser-317, interacts with MEFV and BECN1 simultaneously. Interacts with TRIM21 and IRF3, in the presence of TRIM21. Interacts with SESN2. Interacts with SQSTM1. Interacts with C9orf72. Interacts with WDR45. Interacts with ATG13; this interaction is increased in the absence of TMEM39A. Interacts with WIPI2. Interacts with ATP2A2. Interacts with AMBRA1. Interacts with Irgm1; promoting the coassembly of ULK1 and BECN1. Autophosphorylated. Phosphorylated under nutrient-rich conditions; dephosphorylated during starvation or following treatment with rapamycin. In response to nutrient limitation, phosphorylated and activated by AMPK, leading to activate autophagy. Under nutrient sufficiency, phosphorylated by MTOR/mTOR, disrupting the interaction with AMPK and preventing activation of ULK1. In terms of processing, ubiquitinated via 'Lys-63'-linkage by a complex composed of AMBRA1 and TRAF6 following autophagy induction, promoting ULK1 stability and kinase activity. Deubiquitinated by USP20; leading to ULK1 stability and autophagy initiation. Post-translationally, acetylated by KAT5/TIP60 under autophagy induction, promoting protein kinase activity.

It localises to the cytoplasm. Its subcellular location is the cytosol. It is found in the preautophagosomal structure. The catalysed reaction is L-seryl-[protein] + ATP = O-phospho-L-seryl-[protein] + ADP + H(+). It catalyses the reaction L-threonyl-[protein] + ATP = O-phospho-L-threonyl-[protein] + ADP + H(+). Its activity is regulated as follows. Acetylation by KAT5/TIP60 stimulates the protein kinase activity. The protein kinase activity is activated by unanchored 'Lys-63'-linked polyubiquitin chains: unanchored 'Lys-63'-linked polyubiquitin chains are catalyzed by TRIM32 in an AMBRA1-dependent manner. Its function is as follows. Serine/threonine-protein kinase involved in autophagy in response to starvation. Acts upstream of phosphatidylinositol 3-kinase PIK3C3 to regulate the formation of autophagophores, the precursors of autophagosomes. Part of regulatory feedback loops in autophagy: acts both as a downstream effector and negative regulator of mammalian target of rapamycin complex 1 (mTORC1) via interaction with RPTOR. Activated via phosphorylation by AMPK and also acts as a regulator of AMPK by mediating phosphorylation of AMPK subunits PRKAA1, PRKAB2 and PRKAG1, leading to negatively regulate AMPK activity. May phosphorylate ATG13/KIAA0652 and RPTOR; however such data need additional evidences. Plays a role early in neuronal differentiation and is required for granule cell axon formation. Also phosphorylates SESN2 and SQSTM1 to regulate autophagy. Phosphorylates FLCN, promoting autophagy. Phosphorylates AMBRA1 in response to autophagy induction, releasing AMBRA1 from the cytoskeletal docking site to induce autophagosome nucleation. Phosphorylates ATG4B, leading to inhibit autophagy by decreasing both proteolytic activation and delipidation activities of ATG4B. The protein is Serine/threonine-protein kinase ULK1 (Ulk1) of Mus musculus (Mouse).